Reading from the N-terminus, the 229-residue chain is HTH-type transcriptional regulator HbdR (229 aa).

The HTH tetR-type domain occupies 20 to 80 (EERRHQIISA…LTLKNVLDTY (61 aa)). Residues 43 to 62 (TILQIAREAKVSTGLIYQYF) constitute a DNA-binding region (H-T-H motif).

In terms of assembly, homodimer in solution.

With respect to regulation, activity is regulated by the effector molecules 3-hydroxybenzoyl-CoA and benzoyl-CoA, which bind to HbdR, alleviating its repression on the three target promoters and inducing the expression of the hbd genes. Its function is as follows. Transcriptional regulator that controls the expression of the hbd cluster, which contains three catabolic operons and is responsible for the anaerobic degradation of 3-hydroxybenzoate. HbdR suppresses the activity of the three catabolic promoters (PhbdN, PhbdE and PhbdH) by binding to a conserved palindromic operator box. In addition, it slightly increases activity of its own promoter (PhbdR). The HbdR-mediated repression of hbd genes may play a crucial biological role in maintaining requisite hydroxybenzoate levels in the cell. This is HTH-type transcriptional regulator HbdR from Aromatoleum sp. (strain CIB) (Azoarcus sp. (strain CIB)).